A 143-amino-acid chain; its full sequence is Spliceosomal protein DIB1 (143 aa).

N-acetylalanine is present on Ala-2.

It belongs to the DIM1 family. Component of the U4/U6-U5 tri-snRNP complex composed of the U4, U6 and U5 snRNAs and at least PRP3, PRP4, PRP6, PRP8, PRP18, PRP31, PRP38, SNU13, SNU23, SNU66, SNU114, SPP381, SMB1, SMD1, SMD2, SMD3, SMX2, SMX3, LSM2, LSM3, LSM4, LSM5, LSM6, LSM7, LSM8, BRR2 and DIB1.

The protein localises to the nucleus. Functionally, essential role in pre-mRNA splicing. Also essential for entry into mitosis (G2/M progression) as well as for chromosome segregation during mitosis. This Saccharomyces cerevisiae (strain ATCC 204508 / S288c) (Baker's yeast) protein is Spliceosomal protein DIB1 (DIB1).